The sequence spans 1134 residues: Myosin-4 (1134 aa).

In terms of domain architecture, Myosin N-terminal SH3-like spans 110–160; that stretch reads REKLCVWCRVAANGQWHLGKIHSTSSSDDVCVMLSANDDVRTMEEIFPANP. The region spanning 164-830 is the Myosin motor domain; sequence EGVEDLTQLS…VISVLEERKK (667 aa). ATP contacts are provided by residues 255 to 262 and 304 to 312; these read GESGAGKT and NDNSSRFGK. 2 actin-binding regions span residues 589-623 and 710-732; these read LIEK…KQHL and LFKL…KPNS. IQ domains are found at residues 832–861, 855–884, and 891–920; these read VLRG…AAVI, MRNA…SAIV, and ELDA…KNKP. The segment at 913-939 is disordered; the sequence is STQQKNKPRNEKKKTRRKSTKRVSEDK. Over residues 918 to 933 the composition is skewed to basic residues; that stretch reads NKPRNEKKKTRRKSTK. A coiled-coil region spans residues 953–999; the sequence is LADLQSRVLKVEAAIMQKEDENTALQEELQRFEERWLENETRMKSME.

The protein belongs to the TRAFAC class myosin-kinesin ATPase superfamily. Myosin family. Plant myosin class VIII subfamily. Homodimer.

Its function is as follows. Myosin heavy chain that is required for the cell cycle-regulated transport of various organelles and proteins for their segregation. Functions by binding with its tail domain to receptor proteins on organelles and exerting force with its N-terminal motor domain against actin filaments, thereby transporting its cargo along polarized actin cables. This chain is Myosin-4 (VIII-B), found in Arabidopsis thaliana (Mouse-ear cress).